The chain runs to 614 residues: Asparagine synthetase [glutamine-hydrolyzing] 3 (614 aa).

Cys2 functions as the For GATase activity in the catalytic mechanism. Positions 2–216 constitute a Glutamine amidotransferase type-2 domain; it reads CGITGWVDFK…PAHALTFSKD (215 aa). L-glutamine is bound by residues 50–54, 77–79, and Asp102; these read RLAVV and NGE. 377-378 serves as a coordination point for ATP; sequence SG.

Belongs to the asparagine synthetase family.

It catalyses the reaction L-aspartate + L-glutamine + ATP + H2O = L-asparagine + L-glutamate + AMP + diphosphate + H(+). It functions in the pathway amino-acid biosynthesis; L-asparagine biosynthesis; L-asparagine from L-aspartate (L-Gln route): step 1/1. In terms of biological role, asparagine synthetase involved in sporulation. The protein is Asparagine synthetase [glutamine-hydrolyzing] 3 (asnO) of Bacillus subtilis (strain 168).